The following is a 230-amino-acid chain: Flagellar L-ring protein (230 aa).

The N-terminal stretch at 1 to 18 (MNRLNIAVSCLATALLFG) is a signal peptide. Cys19 is lipidated: N-palmitoyl cysteine. Cys19 is lipidated: S-diacylglycerol cysteine.

It belongs to the FlgH family. In terms of assembly, the basal body constitutes a major portion of the flagellar organelle and consists of four rings (L,P,S, and M) mounted on a central rod.

It is found in the cell outer membrane. Its subcellular location is the bacterial flagellum basal body. Assembles around the rod to form the L-ring and probably protects the motor/basal body from shearing forces during rotation. This is Flagellar L-ring protein from Legionella pneumophila (strain Paris).